A 148-amino-acid polypeptide reads, in one-letter code: RING finger protein 24 (148 aa).

The helical transmembrane segment at 24 to 44 threads the bilayer; sequence IYIVVFGTAIFVFILSLLFCC. Residues 78 to 119 form an RING-type zinc finger; it reads CAVCLEDFKPRDELGICPCKHAFHRKCLIKWLEVRKVCPLCN.

Interacts with TRPC1, TRPC3, TRPC4, TRPC5, TRPC6 and TRPC7.

The protein resides in the golgi apparatus membrane. Functionally, may play a role in TRPCs intracellular trafficking. This chain is RING finger protein 24 (RNF24), found in Homo sapiens (Human).